A 249-amino-acid chain; its full sequence is Small ribosomal subunit protein uS2 (249 aa).

It belongs to the universal ribosomal protein uS2 family.

The chain is Small ribosomal subunit protein uS2 from Polynucleobacter necessarius subsp. necessarius (strain STIR1).